Reading from the N-terminus, the 80-residue chain is Small ribosomal subunit protein bS18 (80 aa).

Belongs to the bacterial ribosomal protein bS18 family. In terms of assembly, part of the 30S ribosomal subunit. Forms a tight heterodimer with protein bS6.

Functionally, binds as a heterodimer with protein bS6 to the central domain of the 16S rRNA, where it helps stabilize the platform of the 30S subunit. This Staphylococcus epidermidis (strain ATCC 35984 / DSM 28319 / BCRC 17069 / CCUG 31568 / BM 3577 / RP62A) protein is Small ribosomal subunit protein bS18.